The sequence spans 253 residues: 2-C-methyl-D-erythritol 4-phosphate cytidylyltransferase (253 aa).

This sequence belongs to the IspD/TarI cytidylyltransferase family. IspD subfamily.

It catalyses the reaction 2-C-methyl-D-erythritol 4-phosphate + CTP + H(+) = 4-CDP-2-C-methyl-D-erythritol + diphosphate. It participates in isoprenoid biosynthesis; isopentenyl diphosphate biosynthesis via DXP pathway; isopentenyl diphosphate from 1-deoxy-D-xylulose 5-phosphate: step 2/6. Its function is as follows. Catalyzes the formation of 4-diphosphocytidyl-2-C-methyl-D-erythritol from CTP and 2-C-methyl-D-erythritol 4-phosphate (MEP). In Chlorobium chlorochromatii (strain CaD3), this protein is 2-C-methyl-D-erythritol 4-phosphate cytidylyltransferase.